The chain runs to 393 residues: GDNF family receptor alpha-like (393 aa).

The N-terminal stretch at 1 to 19 (MLVFIFLAVTLSSENESSS) is a signal peptide. The Extracellular segment spans residues 20–349 (QTNDCAHLIQ…LTGFNSFFNG (330 aa)). 4 N-linked (GlcNAc...) asparagine glycosylation sites follow: Asn59, Asn65, Asn101, and Asn115. 11 cysteine pairs are disulfide-bonded: Cys131–Cys189, Cys138–Cys144, Cys155–Cys167, Cys162–Cys210, Cys191–Cys198, Cys220–Cys291, Cys227–Cys233, Cys244–Cys275, Cys252–Cys258, Cys269–Cys316, and Cys293–Cys304. Residues 149–228 (ALYLKACSAN…TCLSVIHTCR (80 aa)) are required for interaction with GDF15. The chain crosses the membrane as a helical span at residues 350-370 (ELLYVVVCMAVTCGILFLVML). Residues 371 to 393 (KLRIQSEKRDPSSIEIAGGVIIQ) are Cytoplasmic-facing.

Belongs to the GDNFR family. In terms of assembly, interacts (via the extracellular domain) with GDF15 and RET; receptor of GDF15, mediates cellular signaling through interaction with RET after GDF15-binding. Interaction with RET requires previous GDF15-binding. Post-translationally, cleaved and inactivated by MMP14, inhibiting the GDF15-GFRAL aversive response. As to expression, expressed in the brainstem, restricted to cells in the area postrema and the immediately adjacent region of the nucleus tractus solitarius.

The protein localises to the cell membrane. Specifically inhibited by 3P10 monoclonal antibody. Strongly activated by LY3463251, a long-acting and stable agonist composed of GDF15 conjugated monomeric human IgG4 Fc. Its function is as follows. Brainstem-restricted receptor for GDF15 hormone, which triggers an aversive response, characterized by nausea, vomiting, and/or loss of appetite in response to various stresses. The aversive response is both required to reduce continuing exposure to those stresses at the time of exposure and to promote avoidance behavior in the future. The GDF15-GFRAL aversive response is triggered by stresses, such as anticancer drugs (camptothecin or cisplatin), cancers or drugs such as metformin. Upon interaction with its ligand, GDF15, mediates the GDF15-induced autophosphorylation and activation of the RET tyrosine kinase receptor, leading to activation of MAPK- and AKT- signaling pathways. Ligand-binding activates GFRAL-expressing neurons localized in the area postrema and nucleus tractus solitarius of the brainstem. The GDF15-GFRAL signal induces expression of genes involved in metabolism, such as lipid metabolism in adipose tissues. This Mus musculus (Mouse) protein is GDNF family receptor alpha-like (Gfral).